The following is a 126-amino-acid chain: uncharacterized protein (126 aa).

At 1–28 (MAGEAVSEHTPDSQEVTVTSVVCCLDSV) the chain is on the cytoplasmic side. The helical transmembrane segment at 29–49 (VEIGHHVVYSVVTPLIVAVLI) threads the bilayer. The Extracellular portion of the chain corresponds to 50-75 (DTMAGEAVLEHTSDSQEEIVTTVVCS). A helical membrane pass occupies residues 76 to 96 (VVPLVCFVVSVVCFVISVVEI). Gly97 is a topological domain (cytoplasmic). A helical transmembrane segment spans residues 98–118 (HHVVYSVVAPLTVTVAVETIA). Topologically, residues 119–126 (EEMDSVHT) are extracellular.

It is found in the membrane. This is an uncharacterized protein from Saccharomyces cerevisiae (strain ATCC 204508 / S288c) (Baker's yeast).